The chain runs to 306 residues: Putative transcriptional regulator (306 aa).

The HTH lysR-type domain occupies 1-61 (MIKRNLNDLL…TRTTRSVSPT (61 aa)). The segment at residues 21–40 (FTRAAAQLGVTQSALSQSIS) is a DNA-binding region (H-T-H motif).

Belongs to the LysR transcriptional regulatory family.

In terms of biological role, may have a role in the regulation of oprD expression. This chain is Putative transcriptional regulator, found in Pseudomonas aeruginosa (strain ATCC 15692 / DSM 22644 / CIP 104116 / JCM 14847 / LMG 12228 / 1C / PRS 101 / PAO1).